The sequence spans 431 residues: 3-phosphoshikimate 1-carboxyvinyltransferase (431 aa).

3 residues coordinate 3-phosphoshikimate: K20, S21, and R25. K20 is a binding site for phosphoenolpyruvate. Positions 91 and 119 each coordinate phosphoenolpyruvate. S164, Q166, D317, and K344 together coordinate 3-phosphoshikimate. Q166 is a binding site for phosphoenolpyruvate. The Proton acceptor role is filled by D317. Phosphoenolpyruvate is bound by residues R348 and R390.

This sequence belongs to the EPSP synthase family. Monomer.

The protein resides in the cytoplasm. The catalysed reaction is 3-phosphoshikimate + phosphoenolpyruvate = 5-O-(1-carboxyvinyl)-3-phosphoshikimate + phosphate. It functions in the pathway metabolic intermediate biosynthesis; chorismate biosynthesis; chorismate from D-erythrose 4-phosphate and phosphoenolpyruvate: step 6/7. Functionally, catalyzes the transfer of the enolpyruvyl moiety of phosphoenolpyruvate (PEP) to the 5-hydroxyl of shikimate-3-phosphate (S3P) to produce enolpyruvyl shikimate-3-phosphate and inorganic phosphate. This is 3-phosphoshikimate 1-carboxyvinyltransferase from Aquifex aeolicus (strain VF5).